Consider the following 414-residue polypeptide: NFATC2-interacting protein (414 aa).

The tract at residues 1–42 is disordered; that stretch reads MAEPLRRRGPRSRGGRASRGARRARAARGRCPRAPRSPTRLI. Positions 7–33 are enriched in basic residues; that stretch reads RRGPRSRGGRASRGARRARAARGRCPR. Ser52 and Ser54 each carry phosphoserine. Residues 63-118 form a disordered region; sequence ADPGEVPVARLPAPAAPEQDSDSDSEGAAEGPAGAPRTLVRRRRRLLDPGEAPVVP. The segment covering 68–79 has biased composition (low complexity); it reads VPVARLPAPAAP. Ser83, Ser85, and Ser87 each carry phosphoserine. Low complexity predominate over residues 90 to 100; it reads AAEGPAGAPRT. Phosphoserine is present on Ser121. Residue Lys123 forms a Glycyl lysine isopeptide (Lys-Gly) (interchain with G-Cter in SUMO2) linkage. Residues 139–208 are disordered; it reads KLCPSEPEDE…SSRNKSRKHT (70 aa). A coiled-coil region spans residues 170–229; that stretch reads KKKLRKKHEKEEKKMEEFPDQDISPLPQPSSRNKSRKHTEALQKLREVNKRLQDLRSCLS. Phosphoserine is present on residues Ser193, Ser199, and Ser309. Residues Thr311 and Thr313 each carry the phosphothreonine modification. Residues 343-414 enclose the Ubiquitin-like domain; sequence LRLRVQGKEK…ESGDLIEVWG (72 aa). Residues Ser364 and Ser385 each carry the phosphoserine modification.

Interacts with NFATC2, TRAF1, TRAF2 and PRMT1. Interacts with UBE2I/UBC9. Post-translationally, methylation at the N-terminus by PRMT1 modulates interaction with the NFAT complex and results in augmented cytokine production.

It localises to the nucleus. The protein resides in the cytoplasm. In T-helper 2 (Th2) cells, regulates the magnitude of NFAT-driven transcription of a specific subset of cytokine genes, including IL3, IL4, IL5 and IL13, but not IL2. Recruits PRMT1 to the IL4 promoter; this leads to enhancement of histone H4 'Arg-3'-methylation and facilitates subsequent histone acetylation at the IL4 locus, thus promotes robust cytokine expression. Down-regulates formation of poly-SUMO chains by UBE2I/UBC9. This chain is NFATC2-interacting protein (Nfatc2ip), found in Rattus norvegicus (Rat).